The sequence spans 493 residues: Chitinase 1 (493 aa).

An N-terminal signal peptide occupies residues 1–20; sequence MISCNILGITIAAFITSTLA. Positions 27–318 constitute a GH18 domain; that stretch reads VNVMYYWGQN…HGSSAALGQA (292 aa). The Proton donor role is filled by E164.

It belongs to the glycosyl hydrolase 18 family. Chitinase class III subfamily.

It carries out the reaction Random endo-hydrolysis of N-acetyl-beta-D-glucosaminide (1-&gt;4)-beta-linkages in chitin and chitodextrins.. The chain is Chitinase 1 (CHI1) from Rhizopus niveus.